The sequence spans 124 residues: Small ribosomal subunit protein uS12 (124 aa).

Position 89 is a 3-methylthioaspartic acid (Asp-89).

This sequence belongs to the universal ribosomal protein uS12 family. Part of the 30S ribosomal subunit. Contacts proteins S8 and S17. May interact with IF1 in the 30S initiation complex.

In terms of biological role, with S4 and S5 plays an important role in translational accuracy. Functionally, interacts with and stabilizes bases of the 16S rRNA that are involved in tRNA selection in the A site and with the mRNA backbone. Located at the interface of the 30S and 50S subunits, it traverses the body of the 30S subunit contacting proteins on the other side and probably holding the rRNA structure together. The combined cluster of proteins S8, S12 and S17 appears to hold together the shoulder and platform of the 30S subunit. This chain is Small ribosomal subunit protein uS12, found in Tolumonas auensis (strain DSM 9187 / NBRC 110442 / TA 4).